A 474-amino-acid polypeptide reads, in one-letter code: MSKKLHIKTWGCQMNEYDSSKMADLMDEYKGYTLTEEAEEADVLLLNTCSIREKAQEKVFHQLGRWKKLKDKNPNLIIGVGGCVASQEGKVIKDRAQCVDLIFGPQTLHRLPEMIDQIEAGGKAVIDVSFPEIEKFDRLPEPRADGPSAFVSIMEGCSKYCSFCVVPYTRGEEVSRPLDDVILEIAQLAEQGVREVNLLGQNVNAYRGATHDDEICTFAELLRYVAAIDGIDRLRFTTSHPIEFTQDIIDVYEDTPELVSFLHLPVQSGSDRILTQMKRGHMAIEYKSIIRRLRKARPDIQVSSDFIIGFPGESKQDFEDTMKLIEDVQFDHSFSFIYSARPGTPASDLPDDVTLDEKKERLAILQDRITQQAMRYSRQMLGTVQRILVEGPSVKNPMELRGRTETSRVVNFEADPKHIGSFVDVEIVDVYTNSLRGNFIRGEDEMDLRRSLRPSDILAKHKKDDELGVTQYIP.

The region spanning 3 to 120 (KKLHIKTWGC…LPEMIDQIEA (118 aa)) is the MTTase N-terminal domain. [4Fe-4S] cluster is bound by residues Cys12, Cys49, Cys83, Cys157, Cys161, and Cys164. In terms of domain architecture, Radical SAM core spans 143-375 (RADGPSAFVS…QDRITQQAMR (233 aa)). A TRAM domain is found at 378–441 (RQMLGTVQRI…TNSLRGNFIR (64 aa)).

The protein belongs to the methylthiotransferase family. MiaB subfamily. In terms of assembly, monomer. Requires [4Fe-4S] cluster as cofactor.

It is found in the cytoplasm. It catalyses the reaction N(6)-dimethylallyladenosine(37) in tRNA + (sulfur carrier)-SH + AH2 + 2 S-adenosyl-L-methionine = 2-methylsulfanyl-N(6)-dimethylallyladenosine(37) in tRNA + (sulfur carrier)-H + 5'-deoxyadenosine + L-methionine + A + S-adenosyl-L-homocysteine + 2 H(+). Functionally, catalyzes the methylthiolation of N6-(dimethylallyl)adenosine (i(6)A), leading to the formation of 2-methylthio-N6-(dimethylallyl)adenosine (ms(2)i(6)A) at position 37 in tRNAs that read codons beginning with uridine. In Shewanella woodyi (strain ATCC 51908 / MS32), this protein is tRNA-2-methylthio-N(6)-dimethylallyladenosine synthase.